The following is a 361-amino-acid chain: Biotin synthase (361 aa).

A Radical SAM core domain is found at 83–308 (PEVEVEGIIS…RTILRYAGGR (226 aa)). Cys98, Cys102, and Cys105 together coordinate [4Fe-4S] cluster. The [2Fe-2S] cluster site is built by Cys141, Cys174, Cys233, and Arg303.

It belongs to the radical SAM superfamily. Biotin synthase family. As to quaternary structure, homodimer. Requires [4Fe-4S] cluster as cofactor. [2Fe-2S] cluster serves as cofactor.

It carries out the reaction (4R,5S)-dethiobiotin + (sulfur carrier)-SH + 2 reduced [2Fe-2S]-[ferredoxin] + 2 S-adenosyl-L-methionine = (sulfur carrier)-H + biotin + 2 5'-deoxyadenosine + 2 L-methionine + 2 oxidized [2Fe-2S]-[ferredoxin]. Its pathway is cofactor biosynthesis; biotin biosynthesis; biotin from 7,8-diaminononanoate: step 2/2. Its function is as follows. Catalyzes the conversion of dethiobiotin (DTB) to biotin by the insertion of a sulfur atom into dethiobiotin via a radical-based mechanism. The protein is Biotin synthase of Parafrankia sp. (strain EAN1pec).